Consider the following 535-residue polypeptide: KNR4/SMI1 homolog (535 aa).

The segment covering 354–363 (ERKLPEEPKR) has biased composition (basic and acidic residues). The disordered stretch occupies residues 354 to 535 (ERKLPEEPKR…LKDDFENVAL (182 aa)). Polar residues-rich tracts occupy residues 364 to 384 (TVSSSQGSQNTVEPAEQQETA), 397 to 407 (TSLSVDNTGTK), and 456 to 469 (ESTNAVENTETSQE). Residues 474 to 483 (TSEKPEEKPK) show a composition bias toward basic and acidic residues. The span at 484–494 (KQSKKASKKKG) shows a compositional bias: basic residues. Composition is skewed to basic and acidic residues over residues 495-509 (KKDEKKDTDSKTKEP) and 524-535 (EKLKDDFENVAL).

This sequence belongs to the KNR4/SMI1 family.

The chain is KNR4/SMI1 homolog from Kluyveromyces lactis (strain ATCC 8585 / CBS 2359 / DSM 70799 / NBRC 1267 / NRRL Y-1140 / WM37) (Yeast).